We begin with the raw amino-acid sequence, 345 residues long: Isopentenyl-diphosphate delta-isomerase (345 aa).

14 to 15 (RK) lines the substrate pocket. Residues Ser71, 72 to 74 (SMT), Ser102, and Asn130 contribute to the FMN site. 102–104 (SMR) is a binding site for substrate. Gln165 serves as a coordination point for substrate. Glu166 provides a ligand contact to Mg(2+). FMN contacts are provided by residues Lys197, Thr227, 277–279 (GLK), and 298–299 (AG).

The protein belongs to the IPP isomerase type 2 family. In terms of assembly, homooctamer. Dimer of tetramers. The cofactor is FMN. It depends on NADPH as a cofactor. Mg(2+) is required as a cofactor.

It localises to the cytoplasm. It carries out the reaction isopentenyl diphosphate = dimethylallyl diphosphate. Involved in the biosynthesis of isoprenoids. Catalyzes the 1,3-allylic rearrangement of the homoallylic substrate isopentenyl (IPP) to its allylic isomer, dimethylallyl diphosphate (DMAPP). The protein is Isopentenyl-diphosphate delta-isomerase of Rickettsia felis (strain ATCC VR-1525 / URRWXCal2) (Rickettsia azadi).